The primary structure comprises 389 residues: MTILLSETAILPTPLGGTLVNALHRPGHDFDPAELRDLPRLALSERSAADLEMLGTGAYSPLRGFVGEADYLSIIERMRLADGTPWSIPITLPVTREQASELSGRVVLTHGGQDVGWIDVQEKFEARKSFEAREVYRTEDPAHPGVAALLAQGDVNLSGPVALFDVPRGAFPRHHRTPAEVRAVIEARGWRSTVAFQTRNPIHRAHEYLQKVALELVDGLLLHPLVGATKGDDVPADTRVKAYEVLLDNYYPQERTLLSVYPAAMRYAGPREAILHALSRRNYGVTHFIVGRDHAGVGSYYGTYDAQEIFSAYAPQELGIQILKFEHTFYCQSCGQLVSPRTCPHDSSHHLVLSGTKVREKLRAGETLPAEFTRPEVAEVLREAYAAQG.

This sequence belongs to the sulfate adenylyltransferase family.

It catalyses the reaction sulfate + ATP + H(+) = adenosine 5'-phosphosulfate + diphosphate. It functions in the pathway sulfur metabolism; hydrogen sulfide biosynthesis; sulfite from sulfate: step 1/3. This is Sulfate adenylyltransferase from Deinococcus deserti (strain DSM 17065 / CIP 109153 / LMG 22923 / VCD115).